A 473-amino-acid polypeptide reads, in one-letter code: Proline--tRNA ligase (473 aa).

It belongs to the class-II aminoacyl-tRNA synthetase family. ProS type 3 subfamily. In terms of assembly, homodimer.

It is found in the cytoplasm. The catalysed reaction is tRNA(Pro) + L-proline + ATP = L-prolyl-tRNA(Pro) + AMP + diphosphate. Its function is as follows. Catalyzes the attachment of proline to tRNA(Pro) in a two-step reaction: proline is first activated by ATP to form Pro-AMP and then transferred to the acceptor end of tRNA(Pro). The sequence is that of Proline--tRNA ligase from Mesoplasma florum (strain ATCC 33453 / NBRC 100688 / NCTC 11704 / L1) (Acholeplasma florum).